Here is a 1102-residue protein sequence, read N- to C-terminus: DNA-directed RNA polymerase subunit beta (1102 aa).

The tract at residues 1076–1102 is disordered; that stretch reads IDSQRRAPNRPTYESLHTEEDLEEEEV.

The protein belongs to the RNA polymerase beta chain family. In terms of assembly, in cyanobacteria the RNAP catalytic core is composed of 2 alpha, 1 beta, 1 beta', 1 gamma and 1 omega subunit. When a sigma factor is associated with the core the holoenzyme is formed, which can initiate transcription.

It carries out the reaction RNA(n) + a ribonucleoside 5'-triphosphate = RNA(n+1) + diphosphate. DNA-dependent RNA polymerase catalyzes the transcription of DNA into RNA using the four ribonucleoside triphosphates as substrates. The protein is DNA-directed RNA polymerase subunit beta of Synechocystis sp. (strain ATCC 27184 / PCC 6803 / Kazusa).